The following is a 415-amino-acid chain: Serine hydroxymethyltransferase (415 aa).

(6S)-5,6,7,8-tetrahydrofolate contacts are provided by residues Leu117 and 121 to 123 (GHL). Lys226 carries the post-translational modification N6-(pyridoxal phosphate)lysine. Glu241 contributes to the (6S)-5,6,7,8-tetrahydrofolate binding site.

The protein belongs to the SHMT family. In terms of assembly, homodimer. It depends on pyridoxal 5'-phosphate as a cofactor.

Its subcellular location is the cytoplasm. The catalysed reaction is (6R)-5,10-methylene-5,6,7,8-tetrahydrofolate + glycine + H2O = (6S)-5,6,7,8-tetrahydrofolate + L-serine. It participates in one-carbon metabolism; tetrahydrofolate interconversion. Its pathway is amino-acid biosynthesis; glycine biosynthesis; glycine from L-serine: step 1/1. Its function is as follows. Catalyzes the reversible interconversion of serine and glycine with tetrahydrofolate (THF) serving as the one-carbon carrier. This reaction serves as the major source of one-carbon groups required for the biosynthesis of purines, thymidylate, methionine, and other important biomolecules. Also exhibits THF-independent aldolase activity toward beta-hydroxyamino acids, producing glycine and aldehydes, via a retro-aldol mechanism. The chain is Serine hydroxymethyltransferase from Bacillus subtilis (strain 168).